The following is a 318-amino-acid chain: Cis-3-alkyl-4-alkyloxetan-2-one decarboxylase (318 aa).

The AB hydrolase-1 domain occupies Pro-30 to Asp-275.

It belongs to the AB hydrolase superfamily.

The enzyme catalyses a cis-3-alkyl-4-alkyloxetan-2-one = a cis-alkene + CO2. Functionally, involved in olefin biosynthesis. Catalyzes the elimination of carbon dioxide from beta-lactones to form the final olefin product. The S.oneidensis oleABCD genes produce 3,6,9,12,15,19,22,25,28-hentriacontanonaene, which may aid the cells in adapting to a sudden drop in temperature. The sequence is that of Cis-3-alkyl-4-alkyloxetan-2-one decarboxylase from Shewanella oneidensis (strain ATCC 700550 / JCM 31522 / CIP 106686 / LMG 19005 / NCIMB 14063 / MR-1).